We begin with the raw amino-acid sequence, 251 residues long: Hydroxyacylglutathione hydrolase (251 aa).

Zn(2+) contacts are provided by His53, His55, Asp57, His58, His110, Asp127, and His165.

It belongs to the metallo-beta-lactamase superfamily. Glyoxalase II family. As to quaternary structure, monomer. Requires Zn(2+) as cofactor.

The enzyme catalyses an S-(2-hydroxyacyl)glutathione + H2O = a 2-hydroxy carboxylate + glutathione + H(+). It participates in secondary metabolite metabolism; methylglyoxal degradation; (R)-lactate from methylglyoxal: step 2/2. In terms of biological role, thiolesterase that catalyzes the hydrolysis of S-D-lactoyl-glutathione to form glutathione and D-lactic acid. The sequence is that of Hydroxyacylglutathione hydrolase from Yersinia pestis (strain Pestoides F).